The sequence spans 358 residues: Methylthioribose-1-phosphate isomerase (358 aa).

Residues 54-56 (RGA), arginine 96, and glutamine 205 contribute to the substrate site. Catalysis depends on aspartate 246, which acts as the Proton donor. 256–257 (NK) lines the substrate pocket.

This sequence belongs to the eIF-2B alpha/beta/delta subunits family. MtnA subfamily.

The enzyme catalyses 5-(methylsulfanyl)-alpha-D-ribose 1-phosphate = 5-(methylsulfanyl)-D-ribulose 1-phosphate. It functions in the pathway amino-acid biosynthesis; L-methionine biosynthesis via salvage pathway; L-methionine from S-methyl-5-thio-alpha-D-ribose 1-phosphate: step 1/6. Functionally, catalyzes the interconversion of methylthioribose-1-phosphate (MTR-1-P) into methylthioribulose-1-phosphate (MTRu-1-P). The protein is Methylthioribose-1-phosphate isomerase of Pseudomonas fluorescens (strain Pf0-1).